The following is a 611-amino-acid chain: MNKIRFLDKYLVQKIAAGESIDRPCSILRELLDNSIDSGATKIEVFLEEGGIQKILIIDNGSGISQEDLKICYLPHTTSKISSEEDLRKIETLGFRGEALSSIAICSNISITSSTTGNESYQIEVENGIEKCFKKQPAINGTIVDVTKIFHNFPARKRFLKQEPIETKMCLKVLEEKIITHPEINFEINLNQKLRKIYFKESLIDRVQNVYGNVIENNKFKVLKKEHENIKIEIFLAPANFSKKSKRHIKTFVNRRPIDQKDLLEAITNGHSRILSPGNFPICYLFLEINPEYIDFNVHPQKKEVRFFNLPFLFKLISDNINNFFDKDTNNYHDVIIKRQLTDDDHLIEMINQSENFNKTSTYDVPQNKNLETEDNTNEPNKNMIQKDVGLRKYNSIIENRPSLKENITNIFSDSFLEFEEPPNKNEEEDIKFNYIGQIFSEFLIVEKANEIYFIDQHAVHEKIIYEKLRNSKKTIQKLLIPIEFTIVDKNIEKIIDSEIEEYKKMDIIISKIGSEKYQLESIPNICNQYENTLINFFQSRRSRTINSLESDLYATIACRKAVKTNDILSVEFSKYLINEFFKLEIKHCPHGRKIYYKISKFELEKKVDRA.

This sequence belongs to the DNA mismatch repair MutL/HexB family.

In terms of biological role, this protein is involved in the repair of mismatches in DNA. It is required for dam-dependent methyl-directed DNA mismatch repair. May act as a 'molecular matchmaker', a protein that promotes the formation of a stable complex between two or more DNA-binding proteins in an ATP-dependent manner without itself being part of a final effector complex. The sequence is that of DNA mismatch repair protein MutL from Borreliella afzelii (strain PKo) (Borrelia afzelii).